The following is a 313-amino-acid chain: Pseudouridine-5'-phosphate glycosidase (313 aa).

Residue Glu26 is the Proton donor of the active site. Substrate-binding residues include Lys87 and Ala107. Asp139 is a binding site for Mn(2+). 141–143 (SAD) is a binding site for substrate. Catalysis depends on Lys160, which acts as the Nucleophile.

It belongs to the pseudouridine-5'-phosphate glycosidase family. In terms of assembly, homotrimer. Mn(2+) is required as a cofactor.

It catalyses the reaction D-ribose 5-phosphate + uracil = psi-UMP + H2O. Functionally, catalyzes the reversible cleavage of pseudouridine 5'-phosphate (PsiMP) to ribose 5-phosphate and uracil. Functions biologically in the cleavage direction, as part of a pseudouridine degradation pathway. The protein is Pseudouridine-5'-phosphate glycosidase of Corynebacterium aurimucosum (strain ATCC 700975 / DSM 44827 / CIP 107346 / CN-1) (Corynebacterium nigricans).